We begin with the raw amino-acid sequence, 427 residues long: 3-phosphoshikimate 1-carboxyvinyltransferase (427 aa).

Positions 22, 23, and 27 each coordinate 3-phosphoshikimate. Lys-22 provides a ligand contact to phosphoenolpyruvate. Residues Gly-94 and Arg-122 each contribute to the phosphoenolpyruvate site. 3-phosphoshikimate contacts are provided by Ser-165, Gln-167, Asp-313, and Lys-340. A phosphoenolpyruvate-binding site is contributed by Gln-167. The active-site Proton acceptor is the Asp-313. Phosphoenolpyruvate is bound by residues Arg-344 and Arg-386.

The protein belongs to the EPSP synthase family. Monomer.

The protein resides in the cytoplasm. It catalyses the reaction 3-phosphoshikimate + phosphoenolpyruvate = 5-O-(1-carboxyvinyl)-3-phosphoshikimate + phosphate. It participates in metabolic intermediate biosynthesis; chorismate biosynthesis; chorismate from D-erythrose 4-phosphate and phosphoenolpyruvate: step 6/7. In terms of biological role, catalyzes the transfer of the enolpyruvyl moiety of phosphoenolpyruvate (PEP) to the 5-hydroxyl of shikimate-3-phosphate (S3P) to produce enolpyruvyl shikimate-3-phosphate and inorganic phosphate. This is 3-phosphoshikimate 1-carboxyvinyltransferase from Koribacter versatilis (strain Ellin345).